The sequence spans 141 residues: Cystatin (141 aa).

The N-terminal stretch at 1–26 (MVHSQLPVAAPLRLLCALLLLPSATM) is a signal peptide. A Cystatin domain is found at 29-129 (GGISPRSVTD…CHFQVWSRPW (101 aa)). A Secondary area of contact motif is present at residues 73–77 (QVVAG). 2 cysteine pairs are disulfide-bonded: Cys91–Cys107 and Cys120–Cys140.

This sequence belongs to the cystatin family. Expressed by the venom gland at an extremely low level (at protein level).

The protein localises to the secreted. Its function is as follows. Inhibits various C1 cysteine proteases including cathepsin L, papain and cathepsin B. This protein has no toxic activity and its function in the venom is unknown. It may play a role as a housekeeping or regulatory protein. This is Cystatin from Oxyuranus microlepidotus (Inland taipan).